The following is a 124-amino-acid chain: MKYNATKAISIAPPTIPTVNPTINEVFSFELLELELEEEEDKLLSCESDCFAQYVDGHLSHVNEVITQYSPEAQTGHDAVESQTTHPSLPLVAEVEEVAVLDKDELAEALEELDIFCLIFRKRT.

This is an uncharacterized protein from Saccharomyces cerevisiae (strain ATCC 204508 / S288c) (Baker's yeast).